We begin with the raw amino-acid sequence, 631 residues long: MNPSTPSYPTASLYVGDLHPDVTEAMLYEKFSPAGPILSIRICRDLITSGSSNYAYVNFQHTKDAEHALDTMNFDVIKGKPVRIMWSQRDPSLRKSGVGNIFVKNLDKSINNKALYDTVSAFGNILSCNVVCDENGSKGYGFVHFETHEAAERAIKKMNGMLLNGRKVFVGQFKSRKEREAELGARAKEFPNVYIKNFGEDMDDERLKDLFGKFGPALSVKVMTDESGKSKGFGFVSFERHEDAQKAVDEMNGKELNGKQIYVGRAQKKVERQTELKRTFEQMKQDRITRYQVVNLYVKNLDDGIDDERLRKAFSPFGTITSAKVMMEGGRSKGFGFVCFSSPEEATKAVTEMNGRIVATKPLYVALAQRKEERQAYLTNEYMQRMASVRAVPNQRAPPSGYFMTAVPQTQNHAAYYPPSQIARLRPSPRWTAQGARPHPFQNKPSAIRPGAPRVPFSTMRPASSQVPRVMSTQRVANTSTQTVGPRPAAAAAAAATPAVRTVPRYKYAAGVRNPQQHRNAQPQVTMQQLAVHVQGQETLTASRLASAPPQKQKQMLGERLFPLIQAMHPTLAGKITGMLLEIDNSELLYMLESPESLRSKVDEAVAVLQAHQAKEATQKAVNSATGVPTV.

4 consecutive RRM domains span residues 11–89 (ASLY…WSQR), 99–175 (GNIF…QFKS), 191–268 (PNVY…RAQK), and 294–370 (VNLY…LAQR). Tyr140 is subject to Phosphotyrosine. Ser315 carries the phosphoserine modification. An N6,N6-dimethyllysine; alternate modification is found at Lys361. Residue Lys361 forms a Glycyl lysine isopeptide (Lys-Gly) (interchain with G-Cter in SUMO2); alternate linkage. Tyr364 is modified (phosphotyrosine). 3 positions are modified to omega-N-methylarginine: Arg426, Arg430, and Arg449. Residue Arg501 is modified to Dimethylated arginine. Omega-N-methylarginine is present on Arg513. A PABC domain is found at 537–614 (QETLTASRLA…AVAVLQAHQA (78 aa)).

It belongs to the polyadenylate-binding protein type-1 family. Testis specific.

Its subcellular location is the cytoplasm. In terms of biological role, binds the poly(A) tail of mRNA. May be involved in cytoplasmic regulatory processes of mRNA metabolism. Binds poly(A) with a slightly lower affinity as compared to PABPC1. The polypeptide is Polyadenylate-binding protein 3 (PABPC3) (Homo sapiens (Human)).